The primary structure comprises 504 residues: Glucose-6-phosphate isomerase (504 aa).

The active-site Proton donor is the E333. Catalysis depends on residues H364 and K473.

The protein belongs to the GPI family.

The protein resides in the cytoplasm. The enzyme catalyses alpha-D-glucose 6-phosphate = beta-D-fructose 6-phosphate. Its pathway is carbohydrate biosynthesis; gluconeogenesis. It participates in carbohydrate degradation; glycolysis; D-glyceraldehyde 3-phosphate and glycerone phosphate from D-glucose: step 2/4. Catalyzes the reversible isomerization of glucose-6-phosphate to fructose-6-phosphate. This Xanthomonas oryzae pv. oryzae (strain MAFF 311018) protein is Glucose-6-phosphate isomerase.